The primary structure comprises 431 residues: STE20-related kinase adapter protein alpha (431 aa).

Phosphoserine is present on residues Ser2 and Ser46. The region spanning 69-379 is the Protein kinase domain; the sequence is YELLTVIGKG…ASTLLNHSFF (311 aa). Residues 310-347 form a disordered region; the sequence is LTMSPSRSVANSGLSDSLTTSTPRPSNGDSPSHPYHRT. Residues 312–339 are compositionally biased toward polar residues; that stretch reads MSPSRSVANSGLSDSLTTSTPRPSNGDS. A phosphothreonine; by LKB1 mark is found at Thr329 and Thr419.

This sequence belongs to the protein kinase superfamily. STE Ser/Thr protein kinase family. STE20 subfamily. Component of a trimeric complex composed of STK11/LKB1, STRAD (STRADA or STRADB) and CAB39/MO25 (CAB39/MO25alpha or CAB39L/MO25beta): the complex tethers STK11/LKB1 in the cytoplasm and stimulates its catalytic activity.

The protein localises to the nucleus. It is found in the cytoplasm. Its function is as follows. Pseudokinase which, in complex with CAB39/MO25 (CAB39/MO25alpha or CAB39L/MO25beta), binds to and activates STK11/LKB1. Adopts a closed conformation typical of active protein kinases and binds STK11/LKB1 as a pseudosubstrate, promoting conformational change of STK11/LKB1 in an active conformation. This chain is STE20-related kinase adapter protein alpha (STRADA), found in Homo sapiens (Human).